A 196-amino-acid polypeptide reads, in one-letter code: MALVPIVVEQTSKGERSYDIYSRLLKERIIFLTGQVEDHMANLIVAQMLFLEAEDPEKDIYLYINSPGGVVTAGLAIYDTMNFIKPDVATLCTGQACSMGAFLLSGGAKGKRFALPNARVMIHQPLGGARGQATDIQIQAQEILKLKEMLTRKMAEHSGQPFEKVAADTERDNFMSAVEAMEYGLIDKVLTHRDMK.

Catalysis depends on S98, which acts as the Nucleophile. The active site involves H123.

The protein belongs to the peptidase S14 family. Fourteen ClpP subunits assemble into 2 heptameric rings which stack back to back to give a disk-like structure with a central cavity, resembling the structure of eukaryotic proteasomes.

Its subcellular location is the cytoplasm. It catalyses the reaction Hydrolysis of proteins to small peptides in the presence of ATP and magnesium. alpha-casein is the usual test substrate. In the absence of ATP, only oligopeptides shorter than five residues are hydrolyzed (such as succinyl-Leu-Tyr-|-NHMec, and Leu-Tyr-Leu-|-Tyr-Trp, in which cleavage of the -Tyr-|-Leu- and -Tyr-|-Trp bonds also occurs).. In terms of biological role, cleaves peptides in various proteins in a process that requires ATP hydrolysis. Has a chymotrypsin-like activity. Plays a major role in the degradation of misfolded proteins. The sequence is that of ATP-dependent Clp protease proteolytic subunit from Actinobacillus pleuropneumoniae serotype 5b (strain L20).